Here is a 100-residue protein sequence, read N- to C-terminus: Large ribosomal subunit protein uL23 (100 aa).

The protein belongs to the universal ribosomal protein uL23 family. In terms of assembly, part of the 50S ribosomal subunit. Contacts protein L29, and trigger factor when it is bound to the ribosome.

In terms of biological role, one of the early assembly proteins it binds 23S rRNA. One of the proteins that surrounds the polypeptide exit tunnel on the outside of the ribosome. Forms the main docking site for trigger factor binding to the ribosome. This chain is Large ribosomal subunit protein uL23, found in Baumannia cicadellinicola subsp. Homalodisca coagulata.